Consider the following 308-residue polypeptide: Probable manganese-dependent inorganic pyrophosphatase (308 aa).

Residues H9, D13, D15, D74, H96, and D148 each contribute to the Mn(2+) site.

The protein belongs to the PPase class C family. Requires Mn(2+) as cofactor.

It localises to the cytoplasm. It catalyses the reaction diphosphate + H2O = 2 phosphate + H(+). The sequence is that of Probable manganese-dependent inorganic pyrophosphatase from Oceanobacillus iheyensis (strain DSM 14371 / CIP 107618 / JCM 11309 / KCTC 3954 / HTE831).